The chain runs to 827 residues: Periplasmic nitrate reductase (827 aa).

The segment at residues 1 to 32 (MELNRRDFMKANAAMAAAAAAGMTIPVKNVYA) is a signal peptide (tat-type signal). The 4Fe-4S Mo/W bis-MGD-type domain occupies 37–93 (IRWDKAPCRFCGTGCSVLVGTKDGRVVATQGDPDAEVNRGLNCIKGYFLSKIMYGAD). [4Fe-4S] cluster-binding residues include cysteine 44, cysteine 47, cysteine 51, and cysteine 79. Residues lysine 81, glutamine 148, asparagine 173, cysteine 177, 210-217 (WGSNMAEM), 241-245 (STFEH), methionine 371, glutamine 375, asparagine 481, 507-508 (SD), lysine 530, aspartate 557, and 717-726 (TGRVLEHWHT) each bind Mo-bis(molybdopterin guanine dinucleotide). Position 793 (phenylalanine 793) interacts with substrate. Positions 801 and 818 each coordinate Mo-bis(molybdopterin guanine dinucleotide).

Belongs to the prokaryotic molybdopterin-containing oxidoreductase family. NasA/NapA/NarB subfamily. In terms of assembly, component of the periplasmic nitrate reductase NapAB complex composed of NapA and NapB. It depends on [4Fe-4S] cluster as a cofactor. Requires Mo-bis(molybdopterin guanine dinucleotide) as cofactor. Predicted to be exported by the Tat system. The position of the signal peptide cleavage has not been experimentally proven.

It localises to the periplasm. The catalysed reaction is 2 Fe(II)-[cytochrome] + nitrate + 2 H(+) = 2 Fe(III)-[cytochrome] + nitrite + H2O. Its function is as follows. Catalytic subunit of the periplasmic nitrate reductase complex NapAB. Receives electrons from NapB and catalyzes the reduction of nitrate to nitrite. The protein is Periplasmic nitrate reductase of Actinobacillus pleuropneumoniae serotype 7 (strain AP76).